The chain runs to 79 residues: Small ribosomal subunit protein bS18 (79 aa).

It belongs to the bacterial ribosomal protein bS18 family. As to quaternary structure, part of the 30S ribosomal subunit. Forms a tight heterodimer with protein bS6.

Its function is as follows. Binds as a heterodimer with protein bS6 to the central domain of the 16S rRNA, where it helps stabilize the platform of the 30S subunit. The chain is Small ribosomal subunit protein bS18 from Bradyrhizobium sp. (strain BTAi1 / ATCC BAA-1182).